Consider the following 286-residue polypeptide: KH domain-containing protein At2g38610 (286 aa).

Residue Ser-2 is modified to N-acetylserine. The KH domain occupies 141–208 (EIPVDNYPNF…EHLNEQLHIL (68 aa)). Residues 256 to 286 (SNNLREESPGPSGGGSVSPFNSSGKRPKTGC) are disordered. Residues Ser-263 and Ser-273 each carry the phosphoserine modification.

The protein localises to the nucleus. The protein is KH domain-containing protein At2g38610 of Arabidopsis thaliana (Mouse-ear cress).